Here is a 557-residue protein sequence, read N- to C-terminus: Inositol-3-phosphate synthase 1 (557 aa).

21 residues coordinate NAD(+): G67, G68, N69, N70, D141, S177, V178, Q188, R191, T228, A229, N230, T231, G278, S279, D303, S306, N337, N338, D339, and K352. S279 carries the post-translational modification Phosphoserine. S357 carries the phosphoserine modification. G390, D391, D419, and S420 together coordinate NAD(+). A disordered region spans residues 514 to 557 (GIKPEEVKATSPLPCKKESTPATNGCTGDANGHTQAPTPELSTA). S524 is modified (phosphoserine). Polar residues predominate over residues 533–557 (TPATNGCTGDANGHTQAPTPELSTA).

The protein belongs to the myo-inositol 1-phosphate synthase family. As to quaternary structure, homotrimer. Requires NAD(+) as cofactor. In terms of processing, phosphorylation at Ser-524 does not appear to affect enzyme activity, and is detected in brain and testis. Expressed in testis, brain and epididymis (at protein level). Moderately expressed in brain, lung, liver, and kidney. Low expression in heart and spleen. Very low expression in skeletal muscle. As to expression, expressed in testis, spleen, heart, brainstem, hippocampus, cerebellum, cortex and amygdala. Absent or very lowly expressed in intestine, lung and muscle. In terms of tissue distribution, expressed in intestine, lung, liver, muscle, testis, spleen, brainstem, hippocampus, cerebellum, cortex and amygdala. Absent or lowly expressed in heart and kidney. Expressed in intestine (at protein level).

The protein resides in the cytoplasm. The enzyme catalyses D-glucose 6-phosphate = 1D-myo-inositol 3-phosphate. It functions in the pathway polyol metabolism; myo-inositol biosynthesis; myo-inositol from D-glucose 6-phosphate: step 1/2. Its activity is regulated as follows. Inhibited by 2-deoxyglucitol 6-phosphate (dgtolP) and 2-deoxy-D-glucose 6-phosphate. Inhibited by copper, mercury, cadmium, zinc and copper ions. Activated by potassium and ammonium ions. Functionally, key enzyme in myo-inositol biosynthesis pathway that catalyzes the conversion of glucose 6-phosphate to 1-myo-inositol 1-phosphate in a NAD-dependent manner. Rate-limiting enzyme in the synthesis of all inositol-containing compounds. In terms of biological role, key enzyme in myo-inositol biosynthesis pathway that catalyzes the conversion of glucose 6-phosphate to 1-myo-inositol 1-phosphate in a NAD-dependent manner. Competitively inhibits the function of isoform 1, presumably by competing for NAD cofactor. This chain is Inositol-3-phosphate synthase 1 (Isyna1), found in Rattus norvegicus (Rat).